The following is a 188-amino-acid chain: Peptidyl-tRNA hydrolase (188 aa).

Phe-15 lines the tRNA pocket. The Proton acceptor role is filled by His-20. Positions 64, 66, and 112 each coordinate tRNA.

It belongs to the PTH family. As to quaternary structure, monomer.

It is found in the cytoplasm. The catalysed reaction is an N-acyl-L-alpha-aminoacyl-tRNA + H2O = an N-acyl-L-amino acid + a tRNA + H(+). In terms of biological role, hydrolyzes ribosome-free peptidyl-tRNAs (with 1 or more amino acids incorporated), which drop off the ribosome during protein synthesis, or as a result of ribosome stalling. Its function is as follows. Catalyzes the release of premature peptidyl moieties from peptidyl-tRNA molecules trapped in stalled 50S ribosomal subunits, and thus maintains levels of free tRNAs and 50S ribosomes. The protein is Peptidyl-tRNA hydrolase of Borreliella burgdorferi (strain ATCC 35210 / DSM 4680 / CIP 102532 / B31) (Borrelia burgdorferi).